We begin with the raw amino-acid sequence, 190 residues long: B3 domain-containing protein At1g49475 (190 aa).

The interval Met1–Pro27 is disordered. Positions Lys33–Ser125 form a DNA-binding region, TF-B3.

It localises to the nucleus. The sequence is that of B3 domain-containing protein At1g49475 from Arabidopsis thaliana (Mouse-ear cress).